The primary structure comprises 385 residues: S-adenosylmethionine synthase (385 aa).

Histidine 16 serves as a coordination point for ATP. Aspartate 18 contacts Mg(2+). Residue glutamate 44 participates in K(+) binding. L-methionine-binding residues include glutamate 57 and glutamine 100. The segment at 100–110 (QSPDINQGVDR) is flexible loop. ATP is bound by residues 164–166 (DGK), 230–231 (KF), aspartate 239, 245–246 (RK), alanine 262, and lysine 266. Aspartate 239 contacts L-methionine. Lysine 270 is an L-methionine binding site.

Belongs to the AdoMet synthase family. Homotetramer; dimer of dimers. Mg(2+) serves as cofactor. K(+) is required as a cofactor.

It is found in the cytoplasm. The catalysed reaction is L-methionine + ATP + H2O = S-adenosyl-L-methionine + phosphate + diphosphate. The protein operates within amino-acid biosynthesis; S-adenosyl-L-methionine biosynthesis; S-adenosyl-L-methionine from L-methionine: step 1/1. Its function is as follows. Catalyzes the formation of S-adenosylmethionine (AdoMet) from methionine and ATP. The overall synthetic reaction is composed of two sequential steps, AdoMet formation and the subsequent tripolyphosphate hydrolysis which occurs prior to release of AdoMet from the enzyme. In Helicobacter pylori (strain ATCC 700392 / 26695) (Campylobacter pylori), this protein is S-adenosylmethionine synthase.